The primary structure comprises 196 residues: Homeobox protein XENK-2 (196 aa).

The disordered stretch occupies residues P48–R72. Positions K69–R128 form a DNA-binding region, homeobox.

Belongs to the NK-2 homeobox family. In terms of tissue distribution, forebrain and midbrain.

The protein localises to the nucleus. Its function is as follows. Defines dorsal-ventral domains in developing brain. May play a role in defining positional information along the anterior-posterior (a/p) axis and the dorsal-ventral (d/v) axis of the developing nervous system. May be involved in determining positional or boundary information rather than determining a given cell type. The protein is Homeobox protein XENK-2 of Xenopus laevis (African clawed frog).